Consider the following 193-residue polypeptide: UMP-CMP kinase (193 aa).

13–18 contributes to the ATP binding site; the sequence is GAGKGT. Residues 33-63 are NMP; the sequence is SAGDLLRDERKKPDSQYGELIESYIRDGKIV. A ribonucleoside 5'-phosphate contacts are provided by residues R39, 61 to 63, and 93 to 96; these read KIV and GFPR. Residue N100 coordinates CMP. Residues 133–143 are LID; sequence ERGKSSGRSDD. R134 provides a ligand contact to ATP. 2 residues coordinate a ribonucleoside 5'-phosphate: R140 and R151. K179 lines the ATP pocket.

It belongs to the adenylate kinase family. UMP-CMP kinase subfamily. As to quaternary structure, monomer. Mg(2+) serves as cofactor.

Its subcellular location is the nucleus. It localises to the cytoplasm. The catalysed reaction is CMP + ATP = CDP + ADP. It carries out the reaction dCMP + ATP = dCDP + ADP. The enzyme catalyses UMP + ATP = UDP + ADP. It catalyses the reaction a 2'-deoxyribonucleoside 5'-diphosphate + ATP = a 2'-deoxyribonucleoside 5'-triphosphate + ADP. The catalysed reaction is a ribonucleoside 5'-diphosphate + ATP = a ribonucleoside 5'-triphosphate + ADP. Functionally, catalyzes the phosphorylation of pyrimidine nucleoside monophosphates at the expense of ATP. Plays an important role in de novo pyrimidine nucleotide biosynthesis. Has preference for UMP and CMP as phosphate acceptors. Also displays broad nucleoside diphosphate kinase activity. This is UMP-CMP kinase (cmpk1) from Xenopus laevis (African clawed frog).